Reading from the N-terminus, the 194-residue chain is MNKFLIALLVLATLAVSFSQEIGVSILKTDTPKGECKGKTASIGDYISLKYVGKFEDGTVFDSSEIHGGFSFNFTIGERKVIPGLEIGTINICEGEKRSIKIPYQLAYGENGIENAIPPRTDIYFDLEVVSIEGAPAQPFYYQLIPSVGTIIAFSMLAGFIVLVKFIIKRYPDESNSKKPAPGKPKKTKAAKQN.

A signal peptide spans 1–19 (MNKFLIALLVLATLAVSFS). The 90-residue stretch at 44-133 (GDYISLKYVG…YFDLEVVSIE (90 aa)) folds into the PPIase FKBP-type domain. A helical membrane pass occupies residues 148–168 (VGTIIAFSMLAGFIVLVKFII). Residues 173 to 194 (DESNSKKPAPGKPKKTKAAKQN) are disordered. The segment covering 184–194 (KPKKTKAAKQN) has biased composition (basic residues).

It belongs to the FKBP-type PPIase family.

It localises to the membrane. It catalyses the reaction [protein]-peptidylproline (omega=180) = [protein]-peptidylproline (omega=0). With respect to regulation, inhibited by both FK506 and rapamycin. PPIases accelerate the folding of proteins by catalyzing the cis-trans isomerization of proline imidic peptide bonds in oligopeptides. The chain is FK506-binding protein 3 (fkbp3) from Dictyostelium discoideum (Social amoeba).